The following is a 716-amino-acid chain: Delta-1-pyrroline-5-carboxylate synthase 1 (716 aa).

The interval 1–296 (MASVDPSRSF…WESSKDVSTR (296 aa)) is glutamate 5-kinase. Positions 60, 157, and 176 each coordinate substrate. ATP contacts are provided by residues 196–197 (SD), 202–207 (YSGPPS), and 236–242 (RGGMTAK). The interval 297-716 (EMAVAARDCS…VYTHKSLPLQ (420 aa)) is gamma-glutamyl phosphate reductase.

The protein in the N-terminal section; belongs to the glutamate 5-kinase family. It in the C-terminal section; belongs to the gamma-glutamyl phosphate reductase family. Expressed at high levels in leaves.

It carries out the reaction L-glutamate + ATP = L-glutamyl 5-phosphate + ADP. It catalyses the reaction L-glutamate 5-semialdehyde + phosphate + NADP(+) = L-glutamyl 5-phosphate + NADPH + H(+). It participates in amino-acid biosynthesis; L-proline biosynthesis; L-glutamate 5-semialdehyde from L-glutamate: step 1/2. Its pathway is amino-acid biosynthesis; L-proline biosynthesis; L-glutamate 5-semialdehyde from L-glutamate: step 2/2. With respect to regulation, feedback regulated by proline. Its function is as follows. P5CS plays a key role in proline biosynthesis, leading to osmoregulation in plants. Involved in abiotic stress tolerance. In Oryza sativa subsp. japonica (Rice), this protein is Delta-1-pyrroline-5-carboxylate synthase 1.